The chain runs to 892 residues: Polyribonucleotide nucleotidyltransferase (892 aa).

A disordered region spans residues 407-427 (YMHNYEMPPYSTGETGRVGSP). The Mg(2+) site is built by aspartate 521 and aspartate 527. One can recognise a KH domain in the interval 587-646 (PRIITTTVPVDKIGEVIGPKGKMINQIQEDTGAEIAIEDDGTVYISSEGGEAAEKAKEII). Residues 658–730 (GETYNGKVVK…DRGKISLAIP (73 aa)) enclose the S1 motif domain. A disordered region spans residues 727-892 (LAIPGFEDQE…VRRDFDPFED (166 aa)). Basic and acidic residues-rich tracts occupy residues 739-844 (APRR…DRRS) and 851-877 (RRDD…ERSE).

Belongs to the polyribonucleotide nucleotidyltransferase family. It depends on Mg(2+) as a cofactor.

It is found in the cytoplasm. The enzyme catalyses RNA(n+1) + phosphate = RNA(n) + a ribonucleoside 5'-diphosphate. Involved in mRNA degradation. Catalyzes the phosphorolysis of single-stranded polyribonucleotides processively in the 3'- to 5'-direction. The protein is Polyribonucleotide nucleotidyltransferase of Bifidobacterium adolescentis (strain ATCC 15703 / DSM 20083 / NCTC 11814 / E194a).